The sequence spans 446 residues: MKKAYVKSYGCQMNAYDAGRMADVLAAEGYSATESVEEADVVVLNTCHIREKAAEKVYSELGRLRVLKGERAESGQDTRIVVAGCVAQAEGREILSRAPAVDVVVGPQSYHRLPDLLRQSRETRVVDTEFPVEDKFDHLPARRNRGVTGFLTVQEGCDKFCAFCVVPYTRGAEVSRSVAAVVEEARRLVEGGVREITLIGQNVNAYHGDGPDGAPATLGHLMDALSAVPGLLRLRYTTSHPNDFADDLIAAHAGNPLVMPYLHLPVQSGSDRILHAMNRRHTGDAYRRLIERIRTARPDIALSSDFIVGFPGESDADFAETMRLVAEIGFAAAFSFKYSPRAGTPAAEREDAVPEAVKTERLAALQQLLDQQRHAFNAAAVGTVAEILVEKTGRHPGQVAGKTPHLQAVQFDAPASTIGTLVPVRITRAGSNSLFGEVLEGAAAAA.

Residues 2 to 122 (KKAYVKSYGC…LPDLLRQSRE (121 aa)) form the MTTase N-terminal domain. Residues Cys-11, Cys-47, Cys-85, Cys-157, Cys-161, and Cys-164 each contribute to the [4Fe-4S] cluster site. Positions 143–375 (RNRGVTGFLT…QQLLDQQRHA (233 aa)) constitute a Radical SAM core domain. One can recognise a TRAM domain in the interval 378-440 (AAAVGTVAEI…SNSLFGEVLE (63 aa)).

This sequence belongs to the methylthiotransferase family. MiaB subfamily. In terms of assembly, monomer. It depends on [4Fe-4S] cluster as a cofactor.

The protein resides in the cytoplasm. It catalyses the reaction N(6)-dimethylallyladenosine(37) in tRNA + (sulfur carrier)-SH + AH2 + 2 S-adenosyl-L-methionine = 2-methylsulfanyl-N(6)-dimethylallyladenosine(37) in tRNA + (sulfur carrier)-H + 5'-deoxyadenosine + L-methionine + A + S-adenosyl-L-homocysteine + 2 H(+). In terms of biological role, catalyzes the methylthiolation of N6-(dimethylallyl)adenosine (i(6)A), leading to the formation of 2-methylthio-N6-(dimethylallyl)adenosine (ms(2)i(6)A) at position 37 in tRNAs that read codons beginning with uridine. The polypeptide is tRNA-2-methylthio-N(6)-dimethylallyladenosine synthase (Methylorubrum populi (strain ATCC BAA-705 / NCIMB 13946 / BJ001) (Methylobacterium populi)).